The following is a 511-amino-acid chain: Histidine ammonia-lyase (511 aa).

The 5-imidazolinone (Ala-Gly) cross-link spans 142–144 (ASG). S143 is modified (2,3-didehydroalanine (Ser)).

Belongs to the PAL/histidase family. Contains an active site 4-methylidene-imidazol-5-one (MIO), which is formed autocatalytically by cyclization and dehydration of residues Ala-Ser-Gly.

Its subcellular location is the cytoplasm. It carries out the reaction L-histidine = trans-urocanate + NH4(+). It functions in the pathway amino-acid degradation; L-histidine degradation into L-glutamate; N-formimidoyl-L-glutamate from L-histidine: step 1/3. The sequence is that of Histidine ammonia-lyase from Brucella suis biovar 1 (strain 1330).